Reading from the N-terminus, the 147-residue chain is Transthyretin (147 aa).

The first 20 residues, 1–20 (MASLRLFLLCLAGLVFVSEA), serve as a signal peptide directing secretion. The residue at position 30 (C30) is a Sulfocysteine. K35 serves as a coordination point for L-thyroxine. Position 62 is a 4-carboxyglutamate (E62). At S72 the chain carries Phosphoserine. Position 74 (E74) interacts with L-thyroxine. An N-linked (GlcNAc...) asparagine glycan is attached at N118. S137 provides a ligand contact to L-thyroxine.

The protein belongs to the transthyretin family. In terms of assembly, homotetramer. Dimer of dimers. In the homotetramer, subunits assemble around a central channel that can accommodate two ligand molecules. Interacts with RBP4. In terms of processing, sulfonation of the reactive cysteine Cys-30 enhances the stability of the native conformation of TTR, avoiding misassembly of the protein leading to amyloid formation. Detected in plasma (at protein level). Detected in liver.

The protein resides in the secreted. Functionally, thyroid hormone-binding protein. Probably transports thyroxine from the bloodstream to the brain. The chain is Transthyretin (Ttr) from Mus musculus (Mouse).